The chain runs to 369 residues: 4-hydroxy-3-methylbut-2-en-1-yl diphosphate synthase (flavodoxin) (369 aa).

4 residues coordinate [4Fe-4S] cluster: cysteine 270, cysteine 273, cysteine 305, and glutamate 312.

The protein belongs to the IspG family. Requires [4Fe-4S] cluster as cofactor.

The enzyme catalyses (2E)-4-hydroxy-3-methylbut-2-enyl diphosphate + oxidized [flavodoxin] + H2O + 2 H(+) = 2-C-methyl-D-erythritol 2,4-cyclic diphosphate + reduced [flavodoxin]. Its pathway is isoprenoid biosynthesis; isopentenyl diphosphate biosynthesis via DXP pathway; isopentenyl diphosphate from 1-deoxy-D-xylulose 5-phosphate: step 5/6. Functionally, converts 2C-methyl-D-erythritol 2,4-cyclodiphosphate (ME-2,4cPP) into 1-hydroxy-2-methyl-2-(E)-butenyl 4-diphosphate. This Haemophilus ducreyi (strain 35000HP / ATCC 700724) protein is 4-hydroxy-3-methylbut-2-en-1-yl diphosphate synthase (flavodoxin).